The primary structure comprises 228 residues: PKHD-type hydroxylase YbiX (228 aa).

Residues 78–177 (TLSTPLFNRY…RVASFIWIQS (100 aa)) form the Fe2OG dioxygenase domain. Fe cation-binding residues include histidine 96, aspartate 98, and histidine 158. Residue arginine 168 coordinates 2-oxoglutarate.

Requires Fe(2+) as cofactor. The cofactor is L-ascorbate.

This chain is PKHD-type hydroxylase YbiX, found in Escherichia coli O157:H7.